Reading from the N-terminus, the 340-residue chain is Methionine import ATP-binding protein MetN (340 aa).

Residues 2–241 (IRIENLTKIY…PQSSVAKEFI (240 aa)) form the ABC transporter domain. An ATP-binding site is contributed by 38 to 45 (GLSGAGKS).

It belongs to the ABC transporter superfamily. Methionine importer (TC 3.A.1.24) family. In terms of assembly, the complex is composed of two ATP-binding proteins (MetN), two transmembrane proteins (MetI) and a solute-binding protein (MetQ).

It localises to the cell membrane. It carries out the reaction L-methionine(out) + ATP + H2O = L-methionine(in) + ADP + phosphate + H(+). It catalyses the reaction D-methionine(out) + ATP + H2O = D-methionine(in) + ADP + phosphate + H(+). Functionally, part of the ABC transporter complex MetNIQ involved in methionine import. Responsible for energy coupling to the transport system. The protein is Methionine import ATP-binding protein MetN of Desulfitobacterium hafniense (strain Y51).